Reading from the N-terminus, the 226-residue chain is 7-cyano-7-deazaguanine synthase (226 aa).

ATP is bound at residue 9–19; that stretch reads LSGGLDSATVL. Cysteine 189, cysteine 199, cysteine 202, and cysteine 205 together coordinate Zn(2+).

The protein belongs to the QueC family. Requires Zn(2+) as cofactor.

The catalysed reaction is 7-carboxy-7-deazaguanine + NH4(+) + ATP = 7-cyano-7-deazaguanine + ADP + phosphate + H2O + H(+). Its pathway is purine metabolism; 7-cyano-7-deazaguanine biosynthesis. Functionally, catalyzes the ATP-dependent conversion of 7-carboxy-7-deazaguanine (CDG) to 7-cyano-7-deazaguanine (preQ(0)). The sequence is that of 7-cyano-7-deazaguanine synthase from Cupriavidus pinatubonensis (strain JMP 134 / LMG 1197) (Cupriavidus necator (strain JMP 134)).